The sequence spans 187 residues: Adenylate kinase (187 aa).

11–16 (GAGKGT) lines the ATP pocket. Positions 31-60 (STGDILREAVKNQTAMGIEAKRYMDAGDLV) are NMP. Residues Thr32, Arg37, 58–60 (DLV), 86–89 (GFPR), and Gln93 contribute to the AMP site. The LID stretch occupies residues 127–137 (GRAEIEGRADD). Residue Arg128 participates in ATP binding. The AMP site is built by Arg134 and Arg145. Gly173 serves as a coordination point for ATP.

This sequence belongs to the adenylate kinase family. In terms of assembly, monomer.

The protein resides in the cytoplasm. It catalyses the reaction AMP + ATP = 2 ADP. It participates in purine metabolism; AMP biosynthesis via salvage pathway; AMP from ADP: step 1/1. Its function is as follows. Catalyzes the reversible transfer of the terminal phosphate group between ATP and AMP. Plays an important role in cellular energy homeostasis and in adenine nucleotide metabolism. In Leptospira interrogans serogroup Icterohaemorrhagiae serovar copenhageni (strain Fiocruz L1-130), this protein is Adenylate kinase.